A 463-amino-acid polypeptide reads, in one-letter code: Dialkyldecalin synthase (463 aa).

Residues Val13, 32-33 (ER), Ile121, and Asp275 contribute to the FAD site.

It belongs to the PheA/TfdB FAD monooxygenase family. Homodimer. FAD is required as a cofactor.

It catalyses the reaction 4-[(2E,7S,8E,10E,13R,14R,16E,18E)-14-ethyl-7,13-dihydroxy-2,16,18-trimethylicosa-2,8,10,16,18-pentaenoyl]-2-methylidene-5-oxo-2,5-dihydro-1H-pyrrol-3-olate = 4-[(1R,2R,4aS,5S,8aR)-2-[(2R,3R,5E,7E)-3-ethyl-2-hydroxy-5,7-dimethylnona-5,7-dien-1-yl]-5-hydroxy-1-methyl-1,2,4a,5,6,7,8,8a-octahydronaphthalene-1-carbonyl]-2-methylidene-5-oxo-2,5-dihydro-1H-pyrrol-3-olate. The protein operates within antibiotic biosynthesis. In terms of biological role, involved in the biosynthesis of the spirotetramate antibiotics pyrroindomycins. Catalyzes the intramolecular cyclization forming the dialkyldecalin moiety in pyrroindomycins, via an endo-selective [4+2] cycloaddition reaction. The polypeptide is Dialkyldecalin synthase (Streptomyces rugosporus).